The chain runs to 145 residues: Ribonuclease H (145 aa).

The RNase H type-1 domain maps to 1–142; that stretch reads MDTPVYLYTD…ADDLANRGAA (142 aa). Mg(2+)-binding residues include aspartate 10, glutamate 48, aspartate 70, and aspartate 134.

Belongs to the RNase H family. As to quaternary structure, monomer. The cofactor is Mg(2+).

The protein resides in the cytoplasm. The enzyme catalyses Endonucleolytic cleavage to 5'-phosphomonoester.. Endonuclease that specifically degrades the RNA of RNA-DNA hybrids. The chain is Ribonuclease H from Neisseria meningitidis serogroup C / serotype 2a (strain ATCC 700532 / DSM 15464 / FAM18).